The chain runs to 188 residues: Capsid protein (188 aa).

Belongs to the tymoviruses capsid protein family.

It localises to the virion. Its function is as follows. Self-assembles to form a T=3 icosahedral capsid composed of 180 copies of the capsid protein. The capsid encapsulates the single-stranded RNA genome. In Physalis heterophylla (PhMV), this protein is Capsid protein.